Reading from the N-terminus, the 106-residue chain is MRRRSSMDINRAIRVAVDTGNVVLGTKQAIKNIKHGEGQLVIIADNCAKDVREDIFYYTQLSETPVYTHQATSIELGAICGKPFPVSALLVLEPGNSAILNVNNEE.

The protein belongs to the eukaryotic ribosomal protein eL30 family.

The chain is Large ribosomal subunit protein eL30 from Methanococcus maripaludis (strain C7 / ATCC BAA-1331).